Here is a 343-residue protein sequence, read N- to C-terminus: Probable dual-specificity RNA methyltransferase RlmN (343 aa).

Catalysis depends on glutamate 92, which acts as the Proton acceptor. One can recognise a Radical SAM core domain in the interval 98 to 328; the sequence is YHHGLTACIS…TTVRREMGAD (231 aa). An intrachain disulfide couples cysteine 105 to cysteine 333. [4Fe-4S] cluster contacts are provided by cysteine 112, cysteine 116, and cysteine 119. Residues 159–160, serine 191, 214–216, and asparagine 290 each bind S-adenosyl-L-methionine; these read GE and SLH. Cysteine 333 functions as the S-methylcysteine intermediate in the catalytic mechanism.

It belongs to the radical SAM superfamily. RlmN family. The cofactor is [4Fe-4S] cluster.

Its subcellular location is the cytoplasm. The enzyme catalyses adenosine(2503) in 23S rRNA + 2 reduced [2Fe-2S]-[ferredoxin] + 2 S-adenosyl-L-methionine = 2-methyladenosine(2503) in 23S rRNA + 5'-deoxyadenosine + L-methionine + 2 oxidized [2Fe-2S]-[ferredoxin] + S-adenosyl-L-homocysteine. It carries out the reaction adenosine(37) in tRNA + 2 reduced [2Fe-2S]-[ferredoxin] + 2 S-adenosyl-L-methionine = 2-methyladenosine(37) in tRNA + 5'-deoxyadenosine + L-methionine + 2 oxidized [2Fe-2S]-[ferredoxin] + S-adenosyl-L-homocysteine. In terms of biological role, specifically methylates position 2 of adenine 2503 in 23S rRNA and position 2 of adenine 37 in tRNAs. This is Probable dual-specificity RNA methyltransferase RlmN from Alkaliphilus oremlandii (strain OhILAs) (Clostridium oremlandii (strain OhILAs)).